The primary structure comprises 622 residues: Chaperone protein HscA homolog (622 aa).

Belongs to the heat shock protein 70 family.

Functionally, chaperone involved in the maturation of iron-sulfur cluster-containing proteins. Has a low intrinsic ATPase activity which is markedly stimulated by HscB. In Methylobacillus flagellatus (strain ATCC 51484 / DSM 6875 / VKM B-1610 / KT), this protein is Chaperone protein HscA homolog.